Here is a 581-residue protein sequence, read N- to C-terminus: Adenine deaminase (581 aa).

The protein belongs to the metallo-dependent hydrolases superfamily. Adenine deaminase family. It depends on Mn(2+) as a cofactor.

It catalyses the reaction adenine + H2O + H(+) = hypoxanthine + NH4(+). This Brucella suis biovar 1 (strain 1330) protein is Adenine deaminase.